A 229-amino-acid chain; its full sequence is Ribonuclease HII (229 aa).

Residues 34 to 223 (WPVAGADEAG…LRKVEDGPQM (190 aa)) form the RNase H type-2 domain. A divalent metal cation contacts are provided by Asp-40, Glu-41, and Asp-131.

Belongs to the RNase HII family. Requires Mn(2+) as cofactor. The cofactor is Mg(2+).

It localises to the cytoplasm. It catalyses the reaction Endonucleolytic cleavage to 5'-phosphomonoester.. Functionally, endonuclease that specifically degrades the RNA of RNA-DNA hybrids. In Rhizobium leguminosarum bv. trifolii (strain WSM2304), this protein is Ribonuclease HII.